Consider the following 280-residue polypeptide: Large ribosomal subunit protein uL2 (280 aa).

Disordered regions lie at residues Met-1 to Gly-47 and Val-224 to Arg-280. The segment covering Glu-23 to Leu-33 has biased composition (basic and acidic residues). The segment covering Leu-37–Gly-47 has biased composition (basic residues). The segment covering Arg-258–Ile-268 has biased composition (polar residues). Residues Gln-270–Arg-280 show a composition bias toward basic residues.

This sequence belongs to the universal ribosomal protein uL2 family. In terms of assembly, part of the 50S ribosomal subunit. Forms a bridge to the 30S subunit in the 70S ribosome.

Functionally, one of the primary rRNA binding proteins. Required for association of the 30S and 50S subunits to form the 70S ribosome, for tRNA binding and peptide bond formation. It has been suggested to have peptidyltransferase activity; this is somewhat controversial. Makes several contacts with the 16S rRNA in the 70S ribosome. This chain is Large ribosomal subunit protein uL2, found in Corynebacterium diphtheriae (strain ATCC 700971 / NCTC 13129 / Biotype gravis).